The primary structure comprises 223 residues: RNA-free ribonuclease P (223 aa).

The protein belongs to the HARP family.

The catalysed reaction is Endonucleolytic cleavage of RNA, removing 5'-extranucleotides from tRNA precursor.. Functionally, RNA-free RNase P that catalyzes the removal of the 5'-leader sequence from pre-tRNA to produce the mature 5'-terminus. In Methanococcus maripaludis (strain C5 / ATCC BAA-1333), this protein is RNA-free ribonuclease P.